Reading from the N-terminus, the 421-residue chain is UDP-N-acetylglucosamine 1-carboxyvinyltransferase 1 (421 aa).

22–23 provides a ligand contact to phosphoenolpyruvate; sequence KN. Arg-95 is a UDP-N-acetyl-alpha-D-glucosamine binding site. Catalysis depends on Cys-119, which acts as the Proton donor. Cys-119 is subject to 2-(S-cysteinyl)pyruvic acid O-phosphothioketal. Residues 124-128, Asp-308, and Val-330 each bind UDP-N-acetyl-alpha-D-glucosamine; that span reads RPIEQ.

It belongs to the EPSP synthase family. MurA subfamily.

Its subcellular location is the cytoplasm. It catalyses the reaction phosphoenolpyruvate + UDP-N-acetyl-alpha-D-glucosamine = UDP-N-acetyl-3-O-(1-carboxyvinyl)-alpha-D-glucosamine + phosphate. It functions in the pathway cell wall biogenesis; peptidoglycan biosynthesis. Its function is as follows. Cell wall formation. Adds enolpyruvyl to UDP-N-acetylglucosamine. This chain is UDP-N-acetylglucosamine 1-carboxyvinyltransferase 1, found in Staphylococcus aureus (strain MRSA252).